A 332-amino-acid polypeptide reads, in one-letter code: Diaminopimelate epimerase (332 aa).

Substrate is bound by residues Asn13 and Asn73. Catalysis depends on Cys82, which acts as the Proton donor. Residues 83–84, Asn172, Asn209, and 227–228 contribute to the substrate site; these read GN and ER. Catalysis depends on Cys236, which acts as the Proton acceptor. 237-238 is a binding site for substrate; sequence GT.

Belongs to the diaminopimelate epimerase family. As to quaternary structure, homodimer.

Its subcellular location is the cytoplasm. It carries out the reaction (2S,6S)-2,6-diaminopimelate = meso-2,6-diaminopimelate. Its pathway is amino-acid biosynthesis; L-lysine biosynthesis via DAP pathway; DL-2,6-diaminopimelate from LL-2,6-diaminopimelate: step 1/1. In terms of biological role, catalyzes the stereoinversion of LL-2,6-diaminopimelate (L,L-DAP) to meso-diaminopimelate (meso-DAP), a precursor of L-lysine and an essential component of the bacterial peptidoglycan. The polypeptide is Diaminopimelate epimerase (Lactiplantibacillus plantarum (strain ATCC BAA-793 / NCIMB 8826 / WCFS1) (Lactobacillus plantarum)).